The sequence spans 436 residues: 3-ketoacyl-CoA thiolase (436 aa).

Residue C99 is the Acyl-thioester intermediate of the active site. Residues H392 and C422 each act as proton acceptor in the active site.

This sequence belongs to the thiolase-like superfamily. Thiolase family. Heterotetramer of two alpha chains (FadJ) and two beta chains (FadI).

It localises to the cytoplasm. The catalysed reaction is an acyl-CoA + acetyl-CoA = a 3-oxoacyl-CoA + CoA. Its pathway is lipid metabolism; fatty acid beta-oxidation. Catalyzes the final step of fatty acid oxidation in which acetyl-CoA is released and the CoA ester of a fatty acid two carbons shorter is formed. This is 3-ketoacyl-CoA thiolase from Shewanella denitrificans (strain OS217 / ATCC BAA-1090 / DSM 15013).